A 276-amino-acid polypeptide reads, in one-letter code: U6 snRNA phosphodiesterase 1 (276 aa).

A disordered region spans residues 1–58; that stretch reads MIVNYSSSSSEEESGSSSSPSGKRQKLDTETSEALDHGSAQRKVCKSSHLTPRLPLPE. Histidine 131 acts as the Proton acceptor in catalysis. Residues 131–133, tyrosine 213, and 215–221 contribute to the AMP site; these read HLS and DPSFHIS. Residues tyrosine 213 and 217 to 221 contribute to the UMP site; that span reads SFHIS. Histidine 219 (proton donor) is an active-site residue.

Belongs to the 2H phosphoesterase superfamily. USB1 family.

The protein localises to the nucleus. It carries out the reaction a 3'-end uridylyl-uridine-RNA = a 3'-end 2',3'-cyclophospho-uridine-RNA + uridine. The enzyme catalyses a 3'-end uridylyl-adenosine-RNA = a 3'-end 2',3'-cyclophospho-uridine-RNA + adenosine. Its function is as follows. 3'-5' RNA exonuclease that trims the 3' end of oligo(U) and oligo(A) tracts of the pre-U6 small nuclear RNA (snRNA) molecule, leading to the formation of a mature U6 snRNA 3' end-terminated with a 2',3'-cyclic phosphate. Participates in the U6 snRNA 3' end processing that prevents U6 snRNA degradation. In addition also removes uridines from the 3' end of U6atac snRNA and possibly the vault RNA VTRNA1-1. The chain is U6 snRNA phosphodiesterase 1 from Danio rerio (Zebrafish).